A 466-amino-acid polypeptide reads, in one-letter code: 3-isopropylmalate dehydratase large subunit (466 aa).

3 residues coordinate [4Fe-4S] cluster: Cys-346, Cys-406, and Cys-409.

The protein belongs to the aconitase/IPM isomerase family. LeuC type 1 subfamily. In terms of assembly, heterodimer of LeuC and LeuD. Requires [4Fe-4S] cluster as cofactor.

The catalysed reaction is (2R,3S)-3-isopropylmalate = (2S)-2-isopropylmalate. It functions in the pathway amino-acid biosynthesis; L-leucine biosynthesis; L-leucine from 3-methyl-2-oxobutanoate: step 2/4. Catalyzes the isomerization between 2-isopropylmalate and 3-isopropylmalate, via the formation of 2-isopropylmaleate. The chain is 3-isopropylmalate dehydratase large subunit from Alteromonas mediterranea (strain DSM 17117 / CIP 110805 / LMG 28347 / Deep ecotype).